The sequence spans 138 residues: Small ribosomal subunit protein uS11c (138 aa).

Residues 1–23 (MAKPILRIGSRKNTRSSSRKNVR) form a disordered region. Over residues 9-23 (GSRKNTRSSSRKNVR) the composition is skewed to basic residues.

The protein belongs to the universal ribosomal protein uS11 family. In terms of assembly, part of the 30S ribosomal subunit.

It is found in the plastid. It localises to the chloroplast. This Nasturtium officinale (Watercress) protein is Small ribosomal subunit protein uS11c.